The sequence spans 307 residues: Aspartate carbamoyltransferase catalytic subunit (307 aa).

Residues R54 and T55 each contribute to the carbamoyl phosphate site. K83 lines the L-aspartate pocket. The carbamoyl phosphate site is built by R104, H132, and Q135. Residues R165 and R228 each coordinate L-aspartate. Positions 267 and 268 each coordinate carbamoyl phosphate.

The protein belongs to the aspartate/ornithine carbamoyltransferase superfamily. ATCase family. In terms of assembly, heterododecamer (2C3:3R2) of six catalytic PyrB chains organized as two trimers (C3), and six regulatory PyrI chains organized as three dimers (R2).

The enzyme catalyses carbamoyl phosphate + L-aspartate = N-carbamoyl-L-aspartate + phosphate + H(+). It functions in the pathway pyrimidine metabolism; UMP biosynthesis via de novo pathway; (S)-dihydroorotate from bicarbonate: step 2/3. Catalyzes the condensation of carbamoyl phosphate and aspartate to form carbamoyl aspartate and inorganic phosphate, the committed step in the de novo pyrimidine nucleotide biosynthesis pathway. The sequence is that of Aspartate carbamoyltransferase catalytic subunit from Clostridium acetobutylicum (strain ATCC 824 / DSM 792 / JCM 1419 / IAM 19013 / LMG 5710 / NBRC 13948 / NRRL B-527 / VKM B-1787 / 2291 / W).